The chain runs to 284 residues: MKLCDFEVGLDQPFFLIAGTCVVESEQMTIDTAGRLKEICEKLNVPFIYKSSYDKANRSSGKSFRGLGMDEGLRILGEVKRQLGLPVLTDVHSIDEIEQVASVVDVLQTPAFLCRQTDFIHACARSGKPVNIKKGQFLAPHDMKNVIDKARDAAREAGLSEDRFMACERGVSFGYNNLVSDMRSLAIMRETNAPVVFDATHSVQLPGGQGTSSGGQREFVPVLARAAVATGVAGLFMETHPNPAEAKSDGPNAVPLNRMGALLETLVTLDQAVKRNPFLENDFN.

It belongs to the KdsA family.

It localises to the cytoplasm. The catalysed reaction is D-arabinose 5-phosphate + phosphoenolpyruvate + H2O = 3-deoxy-alpha-D-manno-2-octulosonate-8-phosphate + phosphate. Its pathway is carbohydrate biosynthesis; 3-deoxy-D-manno-octulosonate biosynthesis; 3-deoxy-D-manno-octulosonate from D-ribulose 5-phosphate: step 2/3. The protein operates within bacterial outer membrane biogenesis; lipopolysaccharide biosynthesis. This Burkholderia orbicola (strain MC0-3) protein is 2-dehydro-3-deoxyphosphooctonate aldolase.